Consider the following 301-residue polypeptide: Elongation factor Ts (301 aa).

The involved in Mg(2+) ion dislocation from EF-Tu stretch occupies residues 82–85 (TDFV).

Belongs to the EF-Ts family.

The protein localises to the cytoplasm. Functionally, associates with the EF-Tu.GDP complex and induces the exchange of GDP to GTP. It remains bound to the aminoacyl-tRNA.EF-Tu.GTP complex up to the GTP hydrolysis stage on the ribosome. In Hyphomonas neptunium (strain ATCC 15444), this protein is Elongation factor Ts.